The primary structure comprises 350 residues: Phosphate acyltransferase (350 aa).

The protein belongs to the PlsX family. In terms of assembly, homodimer. Probably interacts with PlsY.

Its subcellular location is the cytoplasm. The enzyme catalyses a fatty acyl-[ACP] + phosphate = an acyl phosphate + holo-[ACP]. It participates in lipid metabolism; phospholipid metabolism. Its function is as follows. Catalyzes the reversible formation of acyl-phosphate (acyl-PO(4)) from acyl-[acyl-carrier-protein] (acyl-ACP). This enzyme utilizes acyl-ACP as fatty acyl donor, but not acyl-CoA. The sequence is that of Phosphate acyltransferase from Chelativorans sp. (strain BNC1).